A 308-amino-acid polypeptide reads, in one-letter code: Rhamnose-binding lectin (308 aa).

An N-terminal signal peptide occupies residues 1–23; it reads MMLILKLSLLSLLIATPGLLVSG. SUEL-type lectin domains are found at residues 27–115, 123–213, and 218–308; these read ITCY…SFDC, ICEH…YICT, and VCEG…YACV. The N-linked (GlcNAc...) asparagine glycan is linked to Asn110.

In terms of assembly, homotrimer. As to expression, expressed in eggs, but not in liver.

The protein localises to the secreted. Its function is as follows. Lectin that binds L-rhamnose. Also binds monosaccharides possessing steric similarity to the hydroxyl group orientation at C2 and C4 of the pyranose ring structure of L-rhamnose, such as L-mannose and L-lyxose. The sequence is that of Rhamnose-binding lectin from Silurus asotus (Amur catfish).